Here is a 1281-residue protein sequence, read N- to C-terminus: MPIVMARDLEETASSSEDEEVISQEDHPCIMWTGGCRRIPVLVFHADAILTKDNNIRVIGERYHLSYKIVRTDSRLVRSILTAHGFHEVHPSSTDYNLMWTGSHLKPFLLRTLSEAQKVNHFPRSYELTRKDRLYKNIIRMQHTHGFKAFHILPQTFLLPAEYAEFCNSYSKDRGPWIVKPVASSRGRGVYLINNPNQISLEENILVSRYINNPLLIDDFKFDVRLYVLVTSYDPLVIYLYEEGLARFATVRYDQGAKNIRNQFMHLTNYSVNKKSGDYVSCDDPEVEDYGNKWSMSAMLRYLKQEGRDTTALMAHVEDLIIKTIISAELAIATACKTFVPHRSSCFELYGFDVLIDSTLKPWLLEVNLSPSLACDAPLDLKIKASMISDMFTVVGFVCQDPAQRASTRPIYPTFESSRRNPFQKPQRCRPLSASDAEMKNLVGSAREKGPGKLGGSVLGLSMEEIKVLRRVKEENDRRGGFIRIFPTSETWEIYGSYLEHKTSMNYMLATRLFQDRMTADGAPELKIESLNSKAKLHAALYERKLLSLEVRKRRRRSSRLRAMRPKYPVITQPAEMNVKTETESEEEEEVALDNEDEEQEASQEESAGFLRENQAKYTPSLTALVENTPKENSMKVREWNNKGGHCCKLETQELEPKFNLMQILQDNGNLSKMQARIAFSAYLQHVQIRLMKDSGGQTFSASWAAKEDEQMELVVRFLKRASNNLQHSLRMVLPSRRLALLERRRILAHQLGDFIIVYNKETEQMAEKKSKKKVEEEEEDGVNMENFQEFIRQASEAELEEVLTFYTQKNKSASVFLGTHSKISKNNNNYSDSGAKGDHPETIMEEVKIKPPKQQQTTEIHSDKLSRFTTSAEKEAKLVYSNSSSGPTATLQKIPNTHLSSVTTSDLSPGPCHHSSLSQIPSAIPSMPHQPTILLNTVSASASPCLHPGAQNIPSPTGLPRCRSGSHTIGPFSSFQSAAHIYSQKLSRPSSAKAGSCYLNKHHSGIAKTQKEGEDASLYSKRYNQSMVTAELQRLAEKQAARQYSPSSHINLLTQQVTNLNLATGIINRSSASAPPTLRPIISPSGPTWSTQSDPQAPENHSSSPGSRSLQTGGFAWEGEVENNVYSQATGVVPQHKYHPTAGSYQLQFALQQLEQQKLQSRQLLDQSRARHQAIFGSQTLPNSNLWTMNNGAGCRISSATASGQKPTTLPQKVVPPPSSCASLVPKPPPNHEQVLRRATSQKASKGSSAEGQLNGLQSSLNPAAFVPITSSTDPAHTKI.

The TTL domain occupies 62–407 (RYHLSYKIVR…VCQDPAQRAS (346 aa)). ATP contacts are provided by residues Lys-180, 186–187 (RG), 208–211 (SRYI), and 221–223 (KFD). A protein is bound at residue Arg-186. Residue Arg-247 coordinates L-glutamate. Residue 268–269 (TN) coordinates ATP. Tyr-270, Ser-271, and Lys-293 together coordinate L-glutamate. Mg(2+) contacts are provided by Asp-353, Glu-366, and Asn-368. The interval 378-488 (PLDLKIKASM…RGGFIRIFPT (111 aa)) is c-MTBD region. Lys-384 contacts L-glutamate. Disordered stretches follow at residues 577-614 (MNVKTETESEEEEEVALDNEDEEQEASQEESAGFLREN), 1072-1114 (SASA…LQTG), and 1199-1281 (SSAT…HTKI). Positions 584-604 (ESEEEEEVALDNEDEEQEASQ) are enriched in acidic residues. 4 stretches are compositionally biased toward polar residues: residues 1086–1113 (SGPTWSTQSDPQAPENHSSSPGSRSLQT), 1199–1212 (SSATASGQKPTTLP), 1240–1263 (ATSQKASKGSSAEGQLNGLQSSLN), and 1270–1281 (ITSSTDPAHTKI).

The protein belongs to the tubulin--tyrosine ligase family. In terms of assembly, interacts with the transcriptional coactivators NCOA1/SRC-1 and NCOA2/TIF2. Mg(2+) is required as a cofactor. As to expression, expressed in the retina, found in the rod and cone photoreceptors (at protein level). Widely expressed with highest levels in heart and skeletal muscle and low levels in other tissues.

It localises to the cell projection. The protein localises to the cilium. Its subcellular location is the cytoplasm. The protein resides in the cytoskeleton. It is found in the cilium basal body. It localises to the nucleus. The enzyme catalyses L-glutamyl-[protein] + L-glutamate + ATP = gamma-L-glutamyl-L-glutamyl-[protein] + ADP + phosphate + H(+). It carries out the reaction (L-glutamyl)(n)-gamma-L-glutamyl-L-glutamyl-[protein] + L-glutamate + ATP = (L-glutamyl)(n+1)-gamma-L-glutamyl-L-glutamyl-[protein] + ADP + phosphate + H(+). Functionally, polyglutamylase which modifies tubulin, generating polyglutamate side chains on the gamma-carboxyl group of specific glutamate residues within the C-terminal tail of tubulin. Preferentially mediates ATP-dependent initiation step of the polyglutamylation reaction over the elongation step. Preferentially modifies the alpha-tubulin tail over a beta-tail. Required for CCSAP localization to both polyglutamylated spindle and cilia microtubules. Increases the effects of transcriptional coactivator NCOA2/TIF2 in glucocorticoid receptor-mediated repression and induction and in androgen receptor-mediated induction. This is Tubulin polyglutamylase TTLL5 from Homo sapiens (Human).